A 498-amino-acid chain; its full sequence is 2-(3-amino-3-carboxypropyl)histidine synthase subunit 2 (498 aa).

Positions 89, 110, and 341 each coordinate [4Fe-4S] cluster.

It belongs to the DPH1/DPH2 family. DPH2 subfamily. Component of the 2-(3-amino-3-carboxypropyl)histidine synthase complex composed of dph1, dph2, dph3 and a NADH-dependent reductase. [4Fe-4S] cluster serves as cofactor.

Its pathway is protein modification; peptidyl-diphthamide biosynthesis. Required for the first step of diphthamide biosynthesis, a post-translational modification of histidine which occurs in elongation factor 2. Dph1 and dph2 transfer a 3-amino-3-carboxypropyl (ACP) group from S-adenosyl-L-methionine (SAM) to a histidine residue, the reaction is assisted by a reduction system comprising dph3 and a NADH-dependent reductase. Facilitates the reduction of the catalytic iron-sulfur cluster found in the dph1 subunit. This is 2-(3-amino-3-carboxypropyl)histidine synthase subunit 2 (dph2) from Danio rerio (Zebrafish).